A 996-amino-acid chain; its full sequence is TBC1 domain family member 31 (996 aa).

WD repeat units follow at residues 33-74 (HSTS…LHGN), 75-116 (RFNL…TVTK), 117-157 (ELVS…LDTF), 158-200 (QRKR…CDTL), 201-248 (FCKY…ATGL), 249-296 (FRII…IQTC), and 297-334 (KLLF…NVYS). The stretch at 388–414 (TRVLKQDLTGDLENKENELSEGLNKKR) forms a coiled coil. Residues 424-599 (EYPTKYRMFI…RLFDNIFSNH (176 aa)) enclose the Rab-GAP TBC domain. A coiled-coil region spans residues 699–844 (ELDFLRERQT…LTTSQEAVAK (146 aa)). The segment at 983 to 986 (RARN) is mediates direct interaction with PJA2.

Interacts with PJA2; the interaction is direct and recruits PJA2 to centrosomes. Interacts with OFD1; regulates its activity in cilium assembly. Interacts with PRKACA.

The protein localises to the cytoplasm. The protein resides in the cytoskeleton. Its subcellular location is the microtubule organizing center. It localises to the centrosome. It is found in the centriolar satellite. The protein localises to the cilium basal body. Molecular adapter which is involved in cilium biogenesis. Part of a functional complex including OFD1 a centriolar protein involved in cilium assembly. Could regulate the cAMP-dependent phosphorylation of OFD1, and its subsequent ubiquitination by PJA2 which ultimately leads to its proteasomal degradation. The chain is TBC1 domain family member 31 from Mus musculus (Mouse).